We begin with the raw amino-acid sequence, 78 residues long: Serine rich endogenous peptide 19 (78 aa).

The signal sequence occupies residues 1–25; the sequence is MCNIVVFLLTLTLFLFSGLSNTAFA. An SCOOP motif motif is present at residues 50–64; the sequence is KIEVDGSCSRRAPGR. Positions 56–58 match the SxS motif essential for MIK2 binding motif; the sequence is SCS. A disordered region spans residues 57 to 78; it reads CSRRAPGRRRPPNRPPKPCTKP. Residues 69–78 show a composition bias toward pro residues; the sequence is NRPPKPCTKP.

This sequence belongs to the serine rich endogenous peptide (SCOOP) phytocytokine family. As to quaternary structure, interacts with MIK2 (via extracellular leucine-rich repeat domain); this interaction triggers the formation of complex between MIK2 and the BAK1/SERK3 and SERK4 coreceptors, and subsequent BAK1 activation by phosphorylation.

It localises to the cell membrane. Its subcellular location is the secreted. The protein localises to the extracellular space. It is found in the apoplast. In terms of biological role, brassicaceae-specific phytocytokine (plant endogenous peptide released into the apoplast) perceived by MIK2 in a BAK1/SERK3 and SERK4 coreceptors-dependent manner, that modulates various physiological and antimicrobial processes including growth prevention and reactive oxygen species (ROS) response regulation. The sequence is that of Serine rich endogenous peptide 19 from Arabidopsis thaliana (Mouse-ear cress).